Here is a 1488-residue protein sequence, read N- to C-terminus: Neuropathy target esterase sws (1488 aa).

Residues 1 to 34 (MDVLELLRASVNGCYNTLFSDAWSQYVSKQIATT) lie on the Lumenal side of the membrane. A helical transmembrane segment spans residues 35–55 (TYWYGALLAIGALFIAWFLYF). The Cytoplasmic segment spans residues 56-1488 (KRLASLRLRD…ENVTEADTKN (1433 aa)). 175-302 (IFGHFEKPIF…IRVIQVIMIR (128 aa)) serves as a coordination point for a nucleoside 3',5'-cyclic phosphate. Disordered regions lie at residues 339–379 (PGPV…DPNP) and 402–440 (QQQQ…ATIT). Composition is skewed to low complexity over residues 344-356 (SQAS…MASR) and 402-413 (QQQQSSGVSVGG). Residues 415–424 (HRSSGACTPT) show a composition bias toward polar residues. A nucleoside 3',5'-cyclic phosphate contacts are provided by residues 458–587 (ELGL…VVRR) and 576–703 (IVLD…LSHR). Positions 929–1095 (LVLGGGGARG…VNNLPGHLWR (167 aa)) constitute a PNPLA domain. Residues 933–938 (GGGARG) carry the GXGXXG motif. Positions 960–964 (GVSIG) match the GXSXG motif. The Nucleophile role is filled by Ser-962. The active-site Proton acceptor is Asp-1082. A DGA/G motif is present at residues 1082-1084 (DGG). A Phosphoserine modification is found at Ser-1176. Disordered stretches follow at residues 1348–1376 (RKVD…QGNL) and 1398–1488 (EHKR…DTKN). Over residues 1399-1410 (HKRRQKSKHKRD) the composition is skewed to basic residues. Positions 1440 to 1452 (IDAKLDQLRKLQQ) are enriched in basic and acidic residues. The segment covering 1456–1470 (QGNESEQEQEQEQEQ) has biased composition (acidic residues).

Belongs to the NTE family. In terms of assembly, interacts with Pka-C3; interaction inhibits the catalytic function of Pka-C3 and the esterase activity of sws.

The protein localises to the endoplasmic reticulum membrane. The enzyme catalyses a 1-acyl-sn-glycero-3-phosphocholine + H2O = sn-glycerol 3-phosphocholine + a fatty acid + H(+). In terms of biological role, phospholipase B that deacylates intracellular phosphatidylcholine (PtdCho), generating glycerophosphocholine (GroPtdCho). This deacylation occurs at both sn-2 and sn-1 positions of PtdCho. Its specific chemical modification by certain organophosphorus (OP) compounds leads to distal axonopathy. Plays a role in the signaling mechanism between neurons and glia that regulates glia wrapping during development of the adult brain. Essential for membrane lipid homeostasis and cell survival in both neurons and glia of the adult brain. In Drosophila mojavensis (Fruit fly), this protein is Neuropathy target esterase sws.